The sequence spans 427 residues: ATP-sensitive inward rectifier potassium channel 12 (427 aa).

Residues 1–77 (MTASGRTNPY…LADMFTTCVD (77 aa)) lie on the Cytoplasmic side of the membrane. S-nitrosocysteine is present on Cys75. The chain crosses the membrane as a helical span at residues 78 to 104 (IRWRYMLLIFSLAFLASWLLFGVIFWV). A 1,2-diacyl-sn-glycero-3-phospho-(1D-myo-inositol-4,5-bisphosphate) is bound by residues Arg79 and Arg81. At 105-129 (IAVAHGDLEPAEAHGRTPCVLQVHG) the chain is on the extracellular side. Cys123 and Cys155 are oxidised to a cystine. Residues 130–146 (FMAAFLFSIETQTTIGY) constitute an intramembrane region (helical; Pore-forming). K(+) is bound by residues Thr143, Ile144, Gly145, and Tyr146. A Selectivity filter motif is present at residues 143 to 148 (TIGYGL). At 147–155 (GLRCVTEEC) the chain is on the extracellular side. Residues 156 to 183 (PVAVFMVVAQSIVGCIIDSFMIGAIMAK) form a helical membrane-spanning segment. A 1,2-diacyl-sn-glycero-3-phospho-(1D-myo-inositol-4,5-bisphosphate) contacts are provided by Lys183 and Lys188. Residues 184 to 427 (MARPKKRAQT…QRPYRRESEI (244 aa)) lie on the Cytoplasmic side of the membrane. Positions 387-396 (DEEDEVDGEQ) are enriched in acidic residues. The tract at residues 387-427 (DEEDEVDGEQDSLGPQARRDFDRPQAGTALEQRPYRRESEI) is disordered. The short motif at 425–427 (SEI) is the PDZ-binding element.

The protein belongs to the inward rectifier-type potassium channel (TC 1.A.2.1) family. KCNJ12 subfamily. In terms of assembly, homotetramer. Forms heteromer with KCNJ4. Association, via its PDZ-recognition domain, with LIN7A, LIN7B, LIN7C, DLG1, CASK and APBA1 plays a key role in its localization and trafficking.

It is found in the membrane. The enzyme catalyses K(+)(in) = K(+)(out). With respect to regulation, activated by phosphatidylinositol 4,5-biphosphate (PtdIns(4,5)P2). PtdIns(4,5)P2 binding to the cytoplasmic side of the channel triggers a conformation change leading to channel opening. Its function is as follows. Inward rectifying potassium channel that probably participates in controlling the resting membrane potential in electrically excitable cells. Probably participates in establishing action potential waveform and excitability of neuronal and muscle tissues. Inward rectifier potassium channels are characterized by a greater tendency to allow potassium to flow into the cell rather than out of it. Their voltage dependence is regulated by the concentration of extracellular potassium; as external potassium is raised, the voltage range of the channel opening shifts to more positive voltages. The inward rectification is mainly due to the blockage of outward current by internal magnesium. The polypeptide is ATP-sensitive inward rectifier potassium channel 12 (KCNJ12) (Bos taurus (Bovine)).